The sequence spans 682 residues: Methionine--tRNA ligase (682 aa).

Positions 15–25 match the 'HIGH' region motif; that stretch reads PYANGAIHLGH. Residues Cys-146, Cys-149, Cys-159, and Cys-162 each contribute to the Zn(2+) site. The 'KMSKS' region motif lies at 331–335; that stretch reads KMSKS. Lys-334 lines the ATP pocket. The region spanning 580–682 is the tRNA-binding domain; sequence DFAKLDMRVA…NGVTAGMQVK (103 aa).

It belongs to the class-I aminoacyl-tRNA synthetase family. MetG type 1 subfamily. Homodimer. Zn(2+) is required as a cofactor.

Its subcellular location is the cytoplasm. The enzyme catalyses tRNA(Met) + L-methionine + ATP = L-methionyl-tRNA(Met) + AMP + diphosphate. Functionally, is required not only for elongation of protein synthesis but also for the initiation of all mRNA translation through initiator tRNA(fMet) aminoacylation. This Haemophilus influenzae (strain PittGG) protein is Methionine--tRNA ligase.